The following is a 448-amino-acid chain: Protein EVI2B (448 aa).

An N-terminal signal peptide occupies residues 1–21 (MDPKYFILILFCGHLNNTFFS). Residues Asn16 and Asn50 are each glycosylated (N-linked (GlcNAc...) asparagine). Residues 22-202 (KTETITTEKQ…QTPQKNNYNS (181 aa)) lie on the Extracellular side of the membrane. The interval 74 to 108 (AKVTAGQPTPAVYTSSEKPEAHTSAGQPLAYNTKQ) is disordered. The span at 97 to 108 (SAGQPLAYNTKQ) shows a compositional bias: polar residues. Asn114 carries an N-linked (GlcNAc...) asparagine glycan. Residues 203-226 (IAAILIGVLLTSMLVAIIIIVLWK) form a helical membrane-spanning segment. Topologically, residues 227–448 (CLRKPVLNDQ…SLPPPPAELL (222 aa)) are cytoplasmic. Residue Thr249 is modified to Phosphothreonine. Phosphoserine is present on residues Ser268, Ser271, Ser278, and Ser294. Disordered stretches follow at residues 298–372 (IEDS…DSTS) and 427–448 (SIPPNSDQDLNESLPPPPAELL). Composition is skewed to polar residues over residues 313–333 (VNGTSEDSADGSTVGTAVSSS) and 350–372 (QESNQSDKPTMTIVSPLPNDSTS).

In terms of tissue distribution, bone marrow, peripheral blood mononuclear cells, fibroblasts and Epstein-Barr virus-transformed lymphoblastoid cell lines. Strongly expressed in granulocytic cells, and weakly on lymphocytes cells.

Its subcellular location is the membrane. Required for granulocyte differentiation and functionality of hematopoietic progenitor cells through the control of cell cycle progression and survival of hematopoietic progenitor cells. This Homo sapiens (Human) protein is Protein EVI2B.